The following is a 294-amino-acid chain: MAALQEKKSCSQRMAEFRQYCWNPDTGQMLGRTPARWVWISLYYAAFYVVMTGLFALCIYVLMQTIDPYTPDYQDQLKSPGVTLRPDVYGERGLQISYNISENSSWAGLTHTLHSFLAGYTPASQQDSINCSSEKYFFQETFSAPNHTKFSCKFTADMLQNCSGLVDPSFGFEEGKPCFIIKMNRIVKFLPSNNTAPRVDCTFQDDPQKPRKDIEPLQVQYYPPNGTFSLHYFPYYGKKAQPHYSNPLVAAKFLNVPKNTQVLIVCKIMADHVTFDNPHDPYEGKVEFKLTIQK.

The Cytoplasmic portion of the chain corresponds to 1–36 (MAALQEKKSCSQRMAEFRQYCWNPDTGQMLGRTPAR). The helical; Signal-anchor for type II membrane protein transmembrane segment at 37–57 (WVWISLYYAAFYVVMTGLFAL) threads the bilayer. At 58-294 (CIYVLMQTID…KVEFKLTIQK (237 aa)) the chain is on the extracellular side. N-linked (GlcNAc...) asparagine glycans are attached at residues Asn-99, Asn-103, Asn-130, Asn-146, and Asn-161. Cysteines 131 and 152 form a disulfide. A disulfide bridge links Cys-162 with Cys-178. N-linked (GlcNAc...) asparagine glycosylation is found at Asn-193 and Asn-225. Residues 194–294 (NTAPRVDCTF…KVEFKLTIQK (101 aa)) form an immunoglobulin-like region. A disulfide bridge connects residues Cys-201 and Cys-266.

The protein belongs to the X(+)/potassium ATPases subunit beta family. In terms of assembly, the ATPase pump is composed of two subunits: alpha (catalytic) and beta (regulatory). Interacts with alpha subunit ATP12A; this interaction is required for the formation of a functionally active pump and targeting at the plasma membrane. Interacts (via N-terminus) with alpha subunit ATP4A (via the P-domain). In terms of processing, N-glycosylation is necessary for assembly and functional expression of the pump at the plasma membrane. In terms of tissue distribution, stomach.

The protein localises to the apical cell membrane. The protein resides in the cell membrane. Functionally, the beta subunit of the gastric H(+)/K(+) ATPase pump which transports H(+) ions in exchange for K(+) ions across the apical membrane of parietal cells. Plays a structural and regulatory role in the assembly and membrane targeting of a functionally active pump. Within a transport cycle, the transfer of a H(+) ion across the membrane is coupled to ATP hydrolysis and is associated with a transient phosphorylation of the alpha subunit that shifts the pump conformation from inward-facing (E1) to outward-facing state (E2). Interacts with the phosphorylation domain of the alpha subunit and functions as a ratchet, stabilizing the lumenal-open E2 conformation and preventing the reverse reaction of the transport cycle. This Rattus norvegicus (Rat) protein is Potassium-transporting ATPase subunit beta (Atp4b).